A 921-amino-acid polypeptide reads, in one-letter code: Protein translocase subunit SecA (921 aa).

ATP is bound by residues glutamine 86, 104 to 108, and aspartate 512; that span reads GEGKT. Zn(2+)-binding residues include cysteine 905, cysteine 907, cysteine 916, and histidine 917.

It belongs to the SecA family. In terms of assembly, monomer and homodimer. Part of the essential Sec protein translocation apparatus which comprises SecA, SecYEG and auxiliary proteins SecDF-YajC and YidC. Zn(2+) is required as a cofactor.

The protein localises to the cell inner membrane. It localises to the cytoplasm. The catalysed reaction is ATP + H2O + cellular proteinSide 1 = ADP + phosphate + cellular proteinSide 2.. Part of the Sec protein translocase complex. Interacts with the SecYEG preprotein conducting channel. Has a central role in coupling the hydrolysis of ATP to the transfer of proteins into and across the cell membrane, serving both as a receptor for the preprotein-SecB complex and as an ATP-driven molecular motor driving the stepwise translocation of polypeptide chains across the membrane. This chain is Protein translocase subunit SecA, found in Caulobacter sp. (strain K31).